The primary structure comprises 131 residues: Small ribosomal subunit protein uS8 (131 aa).

It belongs to the universal ribosomal protein uS8 family. In terms of assembly, part of the 30S ribosomal subunit. Contacts proteins S5 and S12.

Its function is as follows. One of the primary rRNA binding proteins, it binds directly to 16S rRNA central domain where it helps coordinate assembly of the platform of the 30S subunit. The polypeptide is Small ribosomal subunit protein uS8 (Nitrosospira multiformis (strain ATCC 25196 / NCIMB 11849 / C 71)).